The following is a 487-amino-acid chain: Glycogen synthase (487 aa).

Lys-20 provides a ligand contact to ADP-alpha-D-glucose.

The protein belongs to the glycosyltransferase 1 family. Bacterial/plant glycogen synthase subfamily.

The enzyme catalyses [(1-&gt;4)-alpha-D-glucosyl](n) + ADP-alpha-D-glucose = [(1-&gt;4)-alpha-D-glucosyl](n+1) + ADP + H(+). It participates in glycan biosynthesis; glycogen biosynthesis. In terms of biological role, synthesizes alpha-1,4-glucan chains using ADP-glucose. This chain is Glycogen synthase, found in Aliivibrio fischeri (strain MJ11) (Vibrio fischeri).